We begin with the raw amino-acid sequence, 714 residues long: Polyribonucleotide nucleotidyltransferase (714 aa).

Residues D488 and D494 each coordinate Mg(2+). In terms of domain architecture, KH spans P555–I614. An S1 motif domain is found at G624–K692.

It belongs to the polyribonucleotide nucleotidyltransferase family. Mg(2+) serves as cofactor.

The protein localises to the cytoplasm. It carries out the reaction RNA(n+1) + phosphate = RNA(n) + a ribonucleoside 5'-diphosphate. In terms of biological role, involved in mRNA degradation. Catalyzes the phosphorolysis of single-stranded polyribonucleotides processively in the 3'- to 5'-direction. The protein is Polyribonucleotide nucleotidyltransferase of Brucella suis biovar 1 (strain 1330).